Here is a 527-residue protein sequence, read N- to C-terminus: Bifunctional purine biosynthesis protein PurH (527 aa).

The region spanning 1 to 149 is the MGS-like domain; it reads MASDFLPVRR…KNFARVAVAT (149 aa).

This sequence belongs to the PurH family.

It carries out the reaction (6R)-10-formyltetrahydrofolate + 5-amino-1-(5-phospho-beta-D-ribosyl)imidazole-4-carboxamide = 5-formamido-1-(5-phospho-D-ribosyl)imidazole-4-carboxamide + (6S)-5,6,7,8-tetrahydrofolate. It catalyses the reaction IMP + H2O = 5-formamido-1-(5-phospho-D-ribosyl)imidazole-4-carboxamide. The protein operates within purine metabolism; IMP biosynthesis via de novo pathway; 5-formamido-1-(5-phospho-D-ribosyl)imidazole-4-carboxamide from 5-amino-1-(5-phospho-D-ribosyl)imidazole-4-carboxamide (10-formyl THF route): step 1/1. It participates in purine metabolism; IMP biosynthesis via de novo pathway; IMP from 5-formamido-1-(5-phospho-D-ribosyl)imidazole-4-carboxamide: step 1/1. The chain is Bifunctional purine biosynthesis protein PurH from Xanthomonas oryzae pv. oryzae (strain PXO99A).